Here is a 439-residue protein sequence, read N- to C-terminus: MASSCCLHAILLCSLLFITSTTAQSETSFRPKGLILPITKDALTLQYLTQIQQRTPLVPVSLTLDLGGQFLWVDCDQGYVSSTYRPARCRSAQCSLAGAGSGCGQCFSPPKPGCNNNTCGLLPDNTITRTATSGELASDTVQVQSSNGKNPGRHVSDKDFLFVCGSTFLLEGLASGVKGMAGLGRTRISLPSQFSAEFSFPRKFAVCLSSSTNSKGVVLFGDGPYTFLPNREFANNDFSYTPLFINPVSTASAFSSREPSSEYFIGVKSIKINEKVVPINTTLLSIDNQGVGGTKISTVNPYTILETSIYNAVTNFFVKELVNITRVASVAPFRACFDSRNIASTRVGPAVPSIDLVLQNENVFWRIFGANSMVQVSENVLCLGFVDGGVSPRTSIVVGGYTIEDNLLQFDLARSRLGFTSSILFRQTTCANFNFTSIA.

Positions 1-23 (MASSCCLHAILLCSLLFITSTTA) are cleaved as a signal peptide. A Peptidase A1 domain is found at 47-420 (YLTQIQQRTP…DLARSRLGFT (374 aa)). 4 N-linked (GlcNAc...) asparagine glycosylation sites follow: Asn116, Asn280, Asn323, and Asn434.

This sequence belongs to the peptidase A1 family. As to quaternary structure, interacts with the Phytophtora parasitica xyloglucanase XEG1 and xyloglucanase-like XLP1. Possesses stronger binding affinity with XLP1, a truncated paralog of P.parasitica XEG1 which has no enzyme activity.

It localises to the secreted. The protein localises to the extracellular space. It is found in the apoplast. Functionally, involved in plant defense against Phytophtora parasitica. Contributes positively to Nicotiana resistance against P.parasitica. Binds the P.parasitica xyloglucanase XEG1 and inhibits its cell wall degrading enzyme activity and its contribution as P.parasitica virulence factor. XEG1 acts as an important virulence factor during P.parasitica infection but also acts as a pathogen-associated molecular pattern (PAMP) in Nictotiana species, where it can trigger defense responses including cell death. Its function is as follows. (Microbial infection) Possesses stronger binding affinity with XLP1, a truncated paralog of P.parasitica XEG1 which has no enzyme activity. Is impaired in its inhibitor activity towards the P.parasitica xyloglucanase XEG1 when hijacked by XLP1 binding. In Nicotiana benthamiana, this protein is Probable aspartic proteinase GIP2.